The primary structure comprises 557 residues: Nucleoprotein (557 aa).

The binding site for the cap structure m7GTP stretch occupies residues 54–235 (MRKDKRSDDD…ITKEESANNI (182 aa)). Mn(2+) is bound by residues Asp379 and Glu381. Positions 389, 496, 499, and 518 each coordinate Zn(2+). Asp522 provides a ligand contact to Mn(2+).

The protein belongs to the arenaviridae nucleocapsid protein family. In terms of assembly, homomultimerizes to form the nucleocapsid. Binds to viral genomic RNA. Interacts with glycoprotein G2. Interacts with protein Z; this interaction probably directs the encapsidated genome to budding sites. Interacts with protein L; this interaction does not interfere with Z-L interaction. Interacts with host IKBKE (via Protein kinase domain); the interaction inhibits IKBKE kinase activity.

It is found in the virion. The protein localises to the host cytoplasm. In terms of biological role, encapsidates the genome, protecting it from nucleases. The encapsidated genomic RNA is termed the nucleocapsid (NC). Serves as template for viral transcription and replication. The increased presence of protein N in host cell does not seem to trigger the switch from transcription to replication as observed in other negative strain RNA viruses. Through the interaction with host IKBKE, strongly inhibits the phosphorylation and nuclear translocation of host IRF3, a protein involved in interferon activation pathway, leading to the inhibition of interferon-beta and IRF3-dependent promoters activation. Also encodes a functional 3'-5' exoribonuclease that degrades preferentially dsRNA substrates and thereby participates in the suppression of interferon induction. The sequence is that of Nucleoprotein from Calomys callosus (Large vesper mouse).